The sequence spans 89 residues: Small ribosomal subunit protein uS15 (89 aa).

It belongs to the universal ribosomal protein uS15 family. As to quaternary structure, part of the 30S ribosomal subunit. Forms a bridge to the 50S subunit in the 70S ribosome, contacting the 23S rRNA.

One of the primary rRNA binding proteins, it binds directly to 16S rRNA where it helps nucleate assembly of the platform of the 30S subunit by binding and bridging several RNA helices of the 16S rRNA. Functionally, forms an intersubunit bridge (bridge B4) with the 23S rRNA of the 50S subunit in the ribosome. The polypeptide is Small ribosomal subunit protein uS15 (Lactobacillus delbrueckii subsp. bulgaricus (strain ATCC 11842 / DSM 20081 / BCRC 10696 / JCM 1002 / NBRC 13953 / NCIMB 11778 / NCTC 12712 / WDCM 00102 / Lb 14)).